A 777-amino-acid chain; its full sequence is Acyl-homoserine lactone acylase PvdQ (777 aa).

A signal peptide spans 1–25 (MIISRQLPSFCLAALFLSFSGGAHA). Residues 196–218 (AGLPAEHWQLAAARQQRFALDRG) constitute a propeptide, spacer peptide. Ser219 (nucleophile) is an active-site residue.

The protein belongs to the peptidase S45 family. Heterodimer of an alpha subunit and a beta subunit processed from the same precursor.

The protein resides in the periplasm. The catalysed reaction is an N-acyl-L-homoserine lactone + H2O = L-homoserine lactone + a carboxylate. Functionally, catalyzes the deacylation of acyl-homoserine lactone (AHL or acyl-HSL), releasing homoserine lactone (HSL) and the corresponding fatty acid. Possesses a specificity for the degradation of long-chain acyl-HSLs (side chains of 11 to 14 carbons in length). The sequence is that of Acyl-homoserine lactone acylase PvdQ (pvdQ) from Pseudomonas fluorescens (strain ATCC BAA-477 / NRRL B-23932 / Pf-5).